Here is a 269-residue protein sequence, read N- to C-terminus: tRNA pseudouridine synthase A (269 aa).

D51 (nucleophile) is an active-site residue. Y109 lines the substrate pocket.

The protein belongs to the tRNA pseudouridine synthase TruA family. As to quaternary structure, homodimer.

It catalyses the reaction uridine(38/39/40) in tRNA = pseudouridine(38/39/40) in tRNA. Functionally, formation of pseudouridine at positions 38, 39 and 40 in the anticodon stem and loop of transfer RNAs. This chain is tRNA pseudouridine synthase A, found in Histophilus somni (strain 129Pt) (Haemophilus somnus).